A 173-amino-acid polypeptide reads, in one-letter code: Large ribosomal subunit protein uL5 (173 aa).

The protein belongs to the universal ribosomal protein uL5 family. As to quaternary structure, component of the large ribosomal subunit.

It localises to the nucleus. The protein localises to the cytoplasm. In terms of biological role, component of the ribosome, a large ribonucleoprotein complex responsible for the synthesis of proteins in the cell. The small ribosomal subunit (SSU) binds messenger RNAs (mRNAs) and translates the encoded message by selecting cognate aminoacyl-transfer RNA (tRNA) molecules. The large subunit (LSU) contains the ribosomal catalytic site termed the peptidyl transferase center (PTC), which catalyzes the formation of peptide bonds, thereby polymerizing the amino acids delivered by tRNAs into a polypeptide chain. The nascent polypeptides leave the ribosome through a tunnel in the LSU and interact with protein factors that function in enzymatic processing, targeting, and the membrane insertion of nascent chains at the exit of the ribosomal tunnel. In Encephalitozoon cuniculi (strain GB-M1) (Microsporidian parasite), this protein is Large ribosomal subunit protein uL5 (RPL11).